Here is a 181-residue protein sequence, read N- to C-terminus: Large ribosomal subunit protein uL5 (181 aa).

Belongs to the universal ribosomal protein uL5 family. Part of the 50S ribosomal subunit; part of the 5S rRNA/L5/L18/L25 subcomplex. Contacts the 5S rRNA and the P site tRNA. Forms a bridge to the 30S subunit in the 70S ribosome.

Its function is as follows. This is one of the proteins that bind and probably mediate the attachment of the 5S RNA into the large ribosomal subunit, where it forms part of the central protuberance. In the 70S ribosome it contacts protein S13 of the 30S subunit (bridge B1b), connecting the 2 subunits; this bridge is implicated in subunit movement. Contacts the P site tRNA; the 5S rRNA and some of its associated proteins might help stabilize positioning of ribosome-bound tRNAs. The polypeptide is Large ribosomal subunit protein uL5 (Mycoplasmopsis pulmonis (strain UAB CTIP) (Mycoplasma pulmonis)).